We begin with the raw amino-acid sequence, 182 residues long: Doublesex- and mab-3-related transcription factor C1 (182 aa).

Thr15 carries the post-translational modification Phosphoserine. A compositionally biased stretch (polar residues) spans 26 to 39 (AQVDTATQEESSQG). 2 disordered regions span residues 26 to 48 (AQVD…QHPE) and 136 to 174 (QTRH…PSGH).

Belongs to the DMRT family. As to expression, expressed in Sertoli cells in male testis.

This is Doublesex- and mab-3-related transcription factor C1 (Dmrtc1) from Mus musculus (Mouse).